We begin with the raw amino-acid sequence, 321 residues long: UDP-N-acetylenolpyruvoylglucosamine reductase (321 aa).

The FAD-binding PCMH-type domain occupies 39–205; sequence RTGGLAELFY…TAALLEGEPG (167 aa). Residue R185 is part of the active site. Residue S234 is the Proton donor of the active site. The active site involves E304.

It belongs to the MurB family. The cofactor is FAD.

Its subcellular location is the cytoplasm. The enzyme catalyses UDP-N-acetyl-alpha-D-muramate + NADP(+) = UDP-N-acetyl-3-O-(1-carboxyvinyl)-alpha-D-glucosamine + NADPH + H(+). It participates in cell wall biogenesis; peptidoglycan biosynthesis. Functionally, cell wall formation. This Bartonella quintana (strain Toulouse) (Rochalimaea quintana) protein is UDP-N-acetylenolpyruvoylglucosamine reductase.